The following is a 37-amino-acid chain: Ice-structuring protein 3 (37 aa).

Belongs to the type-I AFP family.

In terms of biological role, contributes to protect fish blood from freezing at subzero sea water temperatures. Lowers the blood freezing point. Binds to nascent ice crystals and prevents further growth. In Pseudopleuronectes americanus (Winter flounder), this protein is Ice-structuring protein 3.